The chain runs to 149 residues: Transcriptional repressor NrdR (149 aa).

Residues cysteine 3 to cysteine 34 fold into a zinc finger. The ATP-cone domain occupies proline 49–glutamate 139.

This sequence belongs to the NrdR family. Zn(2+) serves as cofactor.

In terms of biological role, negatively regulates transcription of bacterial ribonucleotide reductase nrd genes and operons by binding to NrdR-boxes. The polypeptide is Transcriptional repressor NrdR (Albidiferax ferrireducens (strain ATCC BAA-621 / DSM 15236 / T118) (Rhodoferax ferrireducens)).